The sequence spans 404 residues: DNA gyrase subunit B (404 aa).

A Toprim domain is found at 321-404 (SEIYIVEGDS…VIIMTDADVD (84 aa)). The Mg(2+) site is built by glutamate 327, aspartate 400, and aspartate 402.

Belongs to the type II topoisomerase GyrB family. As to quaternary structure, heterotetramer, composed of two GyrA and two GyrB chains. In the heterotetramer, GyrA contains the active site tyrosine that forms a transient covalent intermediate with DNA, while GyrB binds cofactors and catalyzes ATP hydrolysis. It depends on Mg(2+) as a cofactor. The cofactor is Mn(2+). Ca(2+) is required as a cofactor.

Its subcellular location is the cytoplasm. It carries out the reaction ATP-dependent breakage, passage and rejoining of double-stranded DNA.. Functionally, a type II topoisomerase that negatively supercoils closed circular double-stranded (ds) DNA in an ATP-dependent manner to modulate DNA topology and maintain chromosomes in an underwound state. Negative supercoiling favors strand separation, and DNA replication, transcription, recombination and repair, all of which involve strand separation. Also able to catalyze the interconversion of other topological isomers of dsDNA rings, including catenanes and knotted rings. Type II topoisomerases break and join 2 DNA strands simultaneously in an ATP-dependent manner. This Bacillus cereus protein is DNA gyrase subunit B (gyrB).